Consider the following 330-residue polypeptide: Aspartate--ammonia ligase (330 aa).

The protein belongs to the class-II aminoacyl-tRNA synthetase family. AsnA subfamily.

The protein resides in the cytoplasm. It catalyses the reaction L-aspartate + NH4(+) + ATP = L-asparagine + AMP + diphosphate + H(+). The protein operates within amino-acid biosynthesis; L-asparagine biosynthesis; L-asparagine from L-aspartate (ammonia route): step 1/1. This is Aspartate--ammonia ligase from Actinobacillus pleuropneumoniae serotype 7 (strain AP76).